Here is a 229-residue protein sequence, read N- to C-terminus: 5'-methylthioadenosine/S-adenosylhomocysteine nucleosidase (229 aa).

The active-site Proton acceptor is the glutamate 12. Substrate contacts are provided by residues glycine 78, isoleucine 152, and 173–174; that span reads ME. The active-site Proton donor is aspartate 197.

This sequence belongs to the PNP/UDP phosphorylase family. MtnN subfamily.

It carries out the reaction S-adenosyl-L-homocysteine + H2O = S-(5-deoxy-D-ribos-5-yl)-L-homocysteine + adenine. The catalysed reaction is S-methyl-5'-thioadenosine + H2O = 5-(methylsulfanyl)-D-ribose + adenine. It catalyses the reaction 5'-deoxyadenosine + H2O = 5-deoxy-D-ribose + adenine. It functions in the pathway amino-acid biosynthesis; L-methionine biosynthesis via salvage pathway; S-methyl-5-thio-alpha-D-ribose 1-phosphate from S-methyl-5'-thioadenosine (hydrolase route): step 1/2. In terms of biological role, catalyzes the irreversible cleavage of the glycosidic bond in both 5'-methylthioadenosine (MTA) and S-adenosylhomocysteine (SAH/AdoHcy) to adenine and the corresponding thioribose, 5'-methylthioribose and S-ribosylhomocysteine, respectively. Also cleaves 5'-deoxyadenosine, a toxic by-product of radical S-adenosylmethionine (SAM) enzymes, into 5-deoxyribose and adenine. This chain is 5'-methylthioadenosine/S-adenosylhomocysteine nucleosidase, found in Haemophilus influenzae (strain PittGG).